A 395-amino-acid chain; its full sequence is Ketol-acid reductoisomerase, mitochondrial (395 aa).

The transit peptide at 1 to 47 (MLRTQAARLICNSRVITAKRTFALATRAAAYSRPAARFVKPMITTRG) directs the protein to the mitochondrion. The KARI N-terminal Rossmann domain maps to 57–246 (VETVYERADW…AIGSGYVYQT (190 aa)). NADP(+) contacts are provided by residues 84–93 (GYGSQGYGQG), 108–113 (RKDGAS), and 146–150 (SDAAQ). His-171 is a catalytic residue. The region spanning 247-394 (TFEREVNSDL…KEVRKLRPEN (148 aa)) is the KARI C-terminal knotted domain. Mg(2+)-binding residues include Asp-255, Glu-259, Glu-291, and Glu-295. Residue Ser-317 participates in substrate binding. Phosphoserine is present on Ser-355. The hydrophilic stretch occupies residues 363–395 (DYREKLEKELDTIRNMEIWKVGKEVRKLRPENQ).

It belongs to the ketol-acid reductoisomerase family. Requires Mg(2+) as cofactor.

The protein localises to the mitochondrion. It catalyses the reaction (2R)-2,3-dihydroxy-3-methylbutanoate + NADP(+) = (2S)-2-acetolactate + NADPH + H(+). The catalysed reaction is (2R,3R)-2,3-dihydroxy-3-methylpentanoate + NADP(+) = (S)-2-ethyl-2-hydroxy-3-oxobutanoate + NADPH + H(+). The protein operates within amino-acid biosynthesis; L-isoleucine biosynthesis; L-isoleucine from 2-oxobutanoate: step 2/4. Its pathway is amino-acid biosynthesis; L-valine biosynthesis; L-valine from pyruvate: step 2/4. Functionally, involved in the biosynthesis of branched-chain amino acids (BCAA). Catalyzes the second common step in the parallel biosynthesis of isoleucine and valine. Converts alpha-aceto-alpha-hydroxybutyrate (AHB) to alpha,beta-dihydroxy-beta-methylvalerate (DHMV) and alpha-acetolactate (AL) to alpha,beta-dihydroxy-isovalerate (DHV) in isoleucine and valine biosynthesis, respectively. The polypeptide is Ketol-acid reductoisomerase, mitochondrial (Saccharomyces cerevisiae (strain ATCC 204508 / S288c) (Baker's yeast)).